A 418-amino-acid chain; its full sequence is Vacuole membrane protein HFL1 (418 aa).

Topologically, residues 1–5 are extracellular; that stretch reads MENKL. A helical transmembrane segment spans residues 6-26; that stretch reads LCWWLYWPCVYSSIIATIISF. Topologically, residues 27–43 are cytoplasmic; the sequence is YTITRHLLNYRKPYEQR. Residues 44–64 traverse the membrane as a helical segment; the sequence is LSIRILLLVPIFSVSCASGII. Topologically, residues 65-78 are extracellular; it reads KPEAAQFYVDPIRE. Residues 79 to 99 form a helical membrane-spanning segment; it reads FYEAFVIYTFFTFLTLLLGGE. Topologically, residues 100–141 are cytoplasmic; the sequence is RNIITVLSLNHAPTRHPIPLIGKICKPIDLSDPFDFLFVKKG. Residues 142–162 traverse the membrane as a helical segment; it reads ILQYVWFKPFYCFGTLICSAW. At 163–168 the chain is on the extracellular side; the sequence is KLPKFE. Residues 169–189 traverse the membrane as a helical segment; it reads IFLNVFYNISVTWSLYSLALF. Residues 190–205 lie on the Cytoplasmic side of the membrane; that stretch reads WKCLYPELTPYKPWLK. Residues 206 to 226 form a helical membrane-spanning segment; sequence FLCVKLIIFASYWQSIIIQGL. Residues 227 to 246 are Extracellular-facing; sequence VVTGKLGTGNQDRTSGYVYK. Residues 247-267 form a helical membrane-spanning segment; sequence NGLLCIEMVPFAILHAVAFPW. Residues 268 to 418 are Cytoplasmic-facing; that stretch reads NKYTAFSIPY…DVQSRSSMAC (151 aa). An ATG8-interacting region region spans residues 379–402; it reads RTFPEDPNYPVVHDYTMGHRYSRS.

Belongs to the TMEM184 family. As to quaternary structure, interacts with ATG8.

It localises to the vacuole membrane. In terms of biological role, vacuole membrane protein that recruits ATG8 to facilitate the degradation of vacuolar integral membrane proteins during early-stationary vacuole turnover (EVT) when cells enter stationary phase. The chain is Vacuole membrane protein HFL1 from Saccharomyces cerevisiae (strain ATCC 204508 / S288c) (Baker's yeast).